The primary structure comprises 419 residues: MSFIPVAEDSDFPIQNLPYGVFSTQSNPKPRIGVAIGDQILDLSVIKHLFTGPALSKHQHVFDETTLNNFMGLGQAAWKEARASLQNLLSASQARLRDDKELRQRAFTSQASATMHLPATIGDYTDFYSSRQHATNVGIMFRGKENALLPNWLHLPVGYHGRASSIVVSGTPIRRPMGQMRPDNSKPPVYGACRLLDMELEMAFFVGPGNRFGEPIPISKAHEHIFGMVLMNDWSARDIQQWEYVPLGPFLGKSFGTTISPWVVPMDALMPFVVPNPKQDPKPLPYLCHSQPYTFDINLSVSLKGEGMSQAATICRSNFKHMYWTMLQQLTHHSVNGCNLRPGDLLASGTISGSDPESFGSMLELSWKGTKAIDVEQGQTRTFLLDGDEVIITGHCQGDGYRVGFGQCAGKVLPALSPA.

Serine 2 is modified (N-acetylserine). Phosphoserine occurs at positions 84 and 92. Aspartate 126 serves as a coordination point for Ca(2+). Residue tyrosine 128 coordinates substrate. The Proton acceptor role is filled by histidine 133. Arginine 142 is a binding site for substrate. The Ca(2+) site is built by glutamate 199, glutamate 201, and aspartate 233. Aspartate 233 provides a ligand contact to Mg(2+). Residues glutamine 240 and tyrosine 244 each coordinate substrate. Residues lysine 253 and threonine 257 each coordinate Mg(2+). At serine 309 the chain carries Phosphoserine. Residue threonine 350 participates in substrate binding. A Phosphoserine modification is found at serine 417.

Belongs to the FAH family. Homodimer. Ca(2+) serves as cofactor. The cofactor is Mg(2+). Mainly in liver and kidney.

The catalysed reaction is 4-fumarylacetoacetate + H2O = acetoacetate + fumarate + H(+). Its pathway is amino-acid degradation; L-phenylalanine degradation; acetoacetate and fumarate from L-phenylalanine: step 6/6. This chain is Fumarylacetoacetase (Fah), found in Mus musculus (Mouse).